Here is a 447-residue protein sequence, read N- to C-terminus: MSTGPIPPASEEGSFVSAPSFRSKQRKILHLLLERNTSFTIRSDFPESPKDKLHDSANLSILSGGTPKCCLDLSNLSSGEMSASPLTTSADLEDNGSLDSSGPLDRQLTGKDFHQDLMKGIPVQLLCSTPNAMNHGHRKKIAKRSTSAHKENINTSLKALEWEAPRTPRFRKMPGGPLTSPLCELEMKHLGSPITTVPKLSQNVKLEDQERISEDPMECSLGDQDAKGLSLRKMVPLCDMNAIQMEEEESGSELLIGDFSKVCVLPTVPGKHPDLKYISPDTVAALLSGKFQSVIERFYIIDCRYPYEYLGGHILGALNLHSQKELHEFFLRKPVVPLDIQKRVIIVFLCEFSSERGPRMCRSLREKDRALNQYPALYYPELYILKGGYRDFFPEYMELCDPQSYCPMLHQDHQAELLSWRSQSKAQEGERQLQGQIALLVKGASPQ.

Ser-2 is subject to N-acetylserine. A phosphoserine mark is found at Ser-20, Ser-38, Ser-56, Ser-60, and Ser-63. Thr-66 carries the phosphothreonine; by CDK1 modification. Positions 81 to 90 are enriched in polar residues; sequence MSASPLTTSA. The disordered stretch occupies residues 81–109; the sequence is MSASPLTTSADLEDNGSLDSSGPLDRQLT. The residue at position 128 (Ser-128) is a Phosphoserine. Residue Thr-129 is modified to Phosphothreonine. At Ser-192 the chain carries Phosphoserine; by CDK1. Phosphoserine; by PLK3 occurs at positions 213 and 220. The Rhodanese domain occupies 294–401; it reads VIERFYIIDC…FFPEYMELCD (108 aa). The active site involves Cys-350. Phosphoserine is present on Ser-445.

It belongs to the MPI phosphatase family. Interacts with MAPK14 and 14-3-3 proteins. When phosphorylated on Ser-128 and/or Thr-129, interacts with PLK1. Interacts with MARK3/C-TAK1. Post-translationally, phosphorylated by PLK4. Phosphorylated by PLK1, leading to activate the phosphatase activity. Phosphorylated by CHEK1 and MAPKAPK2. This phosphorylation creates a binding site for 14-3-3 protein and inhibits the phosphatase activity. Phosphorylation by PLK3 at Ser-213 promotes nuclear translocation. Ser-220 is a minor phosphorylation site. Phosphorylation by CDK1 occurs at G2 and G2-M transition and leads to increased activity. As to expression, spleen and thymus.

It localises to the nucleus. The catalysed reaction is O-phospho-L-tyrosyl-[protein] + H2O = L-tyrosyl-[protein] + phosphate. Its function is as follows. Functions as a dosage-dependent inducer in mitotic control. Tyrosine protein phosphatase required for progression of the cell cycle. When phosphorylated, highly effective in activating G2 cells into prophase. Directly dephosphorylates CDK1 and activates its kinase activity. This is M-phase inducer phosphatase 3 (Cdc25c) from Mus musculus (Mouse).